A 1401-amino-acid polypeptide reads, in one-letter code: Uveal autoantigen with coiled-coil domains and ankyrin repeats protein (1401 aa).

6 ANK repeats span residues 25-53, 54-83, 87-116, 120-149, 153-182, and 186-215; these read LMRA…KLDV, EGRS…DITT, AGRN…PTEH, QGRT…SVNA, DGRT…DINS, and QNRT…DVTL. S265 carries the post-translational modification Phosphoserine. 3 coiled-coil regions span residues 273 to 361, 423 to 827, and 856 to 1368; these read TKSN…SRFK, ENEI…EKIY, and ALSS…VIAI. A Glycyl lysine isopeptide (Lys-Gly) (interchain with G-Cter in SUMO2) cross-link involves residue K1020.

As to quaternary structure, component of the apoptosome complex, composed of APAF1, pro-caspase-9 and UACA. In the complex, it probably interacts directly with APAF1. Interacts with LGALS3. Interacts with ARF6 and ACTB. Interacts with RAB39A. In terms of tissue distribution, highly expressed in muscle and heart, moderately in liver, kidney and pancreas, and weakly in placenta and lung.

The protein resides in the nucleus. Its subcellular location is the cytoplasm. It localises to the cytoskeleton. Its function is as follows. Regulates APAF1 expression and plays an important role in the regulation of stress-induced apoptosis. Promotes apoptosis by regulating three pathways, apoptosome up-regulation, LGALS3/galectin-3 down-regulation and NF-kappa-B inactivation. Regulates the redistribution of APAF1 into the nucleus after proapoptotic stress. Down-regulates the expression of LGALS3 by inhibiting NFKB1. In terms of biological role, modulates isoactin dynamics to regulate the morphological alterations required for cell growth and motility. Interaction with ARF6 may modulate cell shape and motility after injury. May be involved in multiple neurite formation. The chain is Uveal autoantigen with coiled-coil domains and ankyrin repeats protein (UACA) from Bos taurus (Bovine).